The primary structure comprises 369 residues: Uroporphyrinogen decarboxylase (369 aa).

Positions 1–26 are disordered; the sequence is MPVLHVDARPGSGPGGVSPPPSGAAL. Substrate-binding positions include 56–60, Asp-105, Tyr-180, Ser-235, and His-348; that span reads RQAGR.

It belongs to the uroporphyrinogen decarboxylase family. In terms of assembly, homodimer.

The protein resides in the cytoplasm. The catalysed reaction is uroporphyrinogen III + 4 H(+) = coproporphyrinogen III + 4 CO2. Its pathway is porphyrin-containing compound metabolism; protoporphyrin-IX biosynthesis; coproporphyrinogen-III from 5-aminolevulinate: step 4/4. Its function is as follows. Catalyzes the decarboxylation of four acetate groups of uroporphyrinogen-III to yield coproporphyrinogen-III. In Frankia casuarinae (strain DSM 45818 / CECT 9043 / HFP020203 / CcI3), this protein is Uroporphyrinogen decarboxylase.